A 101-amino-acid polypeptide reads, in one-letter code: Small ribosomal subunit protein uS10 (101 aa).

The protein belongs to the universal ribosomal protein uS10 family. As to quaternary structure, part of the 30S ribosomal subunit.

In terms of biological role, involved in the binding of tRNA to the ribosomes. This is Small ribosomal subunit protein uS10 from Corynebacterium jeikeium (strain K411).